Reading from the N-terminus, the 202-residue chain is NADH-quinone oxidoreductase subunit C (202 aa).

It belongs to the complex I 30 kDa subunit family. NDH-1 is composed of 14 different subunits. Subunits NuoB, C, D, E, F, and G constitute the peripheral sector of the complex.

It is found in the cell inner membrane. The catalysed reaction is a quinone + NADH + 5 H(+)(in) = a quinol + NAD(+) + 4 H(+)(out). NDH-1 shuttles electrons from NADH, via FMN and iron-sulfur (Fe-S) centers, to quinones in the respiratory chain. The immediate electron acceptor for the enzyme in this species is believed to be ubiquinone. Couples the redox reaction to proton translocation (for every two electrons transferred, four hydrogen ions are translocated across the cytoplasmic membrane), and thus conserves the redox energy in a proton gradient. The polypeptide is NADH-quinone oxidoreductase subunit C (Brucella canis (strain ATCC 23365 / NCTC 10854 / RM-666)).